The primary structure comprises 50 residues: Bacteriocin BacSp222 (50 aa).

N-formylmethionine is present on Met-1.

Its subcellular location is the secreted. Its function is as follows. Has bacteriolytic activity against Gram-positive bacteria B.subtilis, L.lactis and M.luteus and several species from genus Staphylococcus including methicillin-resistant S.aureus, with MIC values ranging from 0.11 uM to 7.8 uM. Has no activity against Gram-negative bacteria or fungi. In vitro, has a dose-dependent cytolytic effect on eukaryotic cells. The chain is Bacteriocin BacSp222 from Staphylococcus pseudintermedius.